We begin with the raw amino-acid sequence, 182 residues long: Large ribosomal subunit protein uL5 (182 aa).

The protein belongs to the universal ribosomal protein uL5 family. Part of the 50S ribosomal subunit; part of the 5S rRNA/L5/L18/L25 subcomplex. Contacts the 5S rRNA and the P site tRNA. Forms a bridge to the 30S subunit in the 70S ribosome.

In terms of biological role, this is one of the proteins that bind and probably mediate the attachment of the 5S RNA into the large ribosomal subunit, where it forms part of the central protuberance. In the 70S ribosome it contacts protein S13 of the 30S subunit (bridge B1b), connecting the 2 subunits; this bridge is implicated in subunit movement. Contacts the P site tRNA; the 5S rRNA and some of its associated proteins might help stabilize positioning of ribosome-bound tRNAs. The protein is Large ribosomal subunit protein uL5 of Trichormus variabilis (strain ATCC 29413 / PCC 7937) (Anabaena variabilis).